A 273-amino-acid polypeptide reads, in one-letter code: Cell division protein FtsQ (273 aa).

Residues 1–20 (MPPRKAHTTRRTPAKKSGVR) are Cytoplasmic-facing. Residues 21-43 (RRLLRLLVTGVPVLALCGVAWLW) traverse the membrane as a helical segment. The Periplasmic portion of the chain corresponds to 44-273 (LESVRLTRIE…STQKSAMGHE (230 aa)). In terms of domain architecture, POTRA spans 47 to 115 (VRLTRIEIVG…GTLRIAVEER (69 aa)).

The protein belongs to the FtsQ/DivIB family. FtsQ subfamily.

It is found in the cell inner membrane. Functionally, essential cell division protein. This chain is Cell division protein FtsQ, found in Rhodothermus marinus (strain ATCC 43812 / DSM 4252 / R-10) (Rhodothermus obamensis).